The chain runs to 365 residues: Probable dual-specificity RNA methyltransferase RlmN (365 aa).

Catalysis depends on E99, which acts as the Proton acceptor. The 240-residue stretch at 105–344 folds into the Radical SAM core domain; the sequence is QSYGLSVCVT…CVVRQEHGTD (240 aa). C112 and C349 form a disulfide bridge. C119, C123, and C126 together coordinate [4Fe-4S] cluster. S-adenosyl-L-methionine is bound by residues 171–172, S203, 227–229, and N305; these read GE and SLH. The active-site S-methylcysteine intermediate is the C349.

It belongs to the radical SAM superfamily. RlmN family. The cofactor is [4Fe-4S] cluster.

The protein resides in the cytoplasm. The catalysed reaction is adenosine(2503) in 23S rRNA + 2 reduced [2Fe-2S]-[ferredoxin] + 2 S-adenosyl-L-methionine = 2-methyladenosine(2503) in 23S rRNA + 5'-deoxyadenosine + L-methionine + 2 oxidized [2Fe-2S]-[ferredoxin] + S-adenosyl-L-homocysteine. The enzyme catalyses adenosine(37) in tRNA + 2 reduced [2Fe-2S]-[ferredoxin] + 2 S-adenosyl-L-methionine = 2-methyladenosine(37) in tRNA + 5'-deoxyadenosine + L-methionine + 2 oxidized [2Fe-2S]-[ferredoxin] + S-adenosyl-L-homocysteine. In terms of biological role, specifically methylates position 2 of adenine 2503 in 23S rRNA and position 2 of adenine 37 in tRNAs. The protein is Probable dual-specificity RNA methyltransferase RlmN of Lactococcus lactis subsp. cremoris (strain SK11).